Reading from the N-terminus, the 558-residue chain is Ribonuclease Y (558 aa).

A helical transmembrane segment spans residues 3 to 23 (VLSILLILVAVGVGIFVGRQF). Positions 248-311 (TTTTVELPSN…EIAKEALQRL (64 aa)) constitute a KH domain. An HD domain is found at 374–467 (VLLHSKEVAY…VCAADALSAA (94 aa)).

The protein belongs to the RNase Y family.

It is found in the cell membrane. Endoribonuclease that initiates mRNA decay. This is Ribonuclease Y from Aquifex aeolicus (strain VF5).